The sequence spans 476 residues: tRNA(Ile)-lysidine synthase (476 aa).

Residue 30–35 (SGGPDS) participates in ATP binding.

Belongs to the tRNA(Ile)-lysidine synthase family.

It localises to the cytoplasm. The enzyme catalyses cytidine(34) in tRNA(Ile2) + L-lysine + ATP = lysidine(34) in tRNA(Ile2) + AMP + diphosphate + H(+). In terms of biological role, ligates lysine onto the cytidine present at position 34 of the AUA codon-specific tRNA(Ile) that contains the anticodon CAU, in an ATP-dependent manner. Cytidine is converted to lysidine, thus changing the amino acid specificity of the tRNA from methionine to isoleucine. The chain is tRNA(Ile)-lysidine synthase from Bacillus cereus (strain ZK / E33L).